Here is a 521-residue protein sequence, read N- to C-terminus: Bifunctional purine biosynthesis protein PurH (521 aa).

An MGS-like domain is found at 1 to 147 (MAKISRALIS…KNNADVTVLV (147 aa)).

It belongs to the PurH family.

It catalyses the reaction (6R)-10-formyltetrahydrofolate + 5-amino-1-(5-phospho-beta-D-ribosyl)imidazole-4-carboxamide = 5-formamido-1-(5-phospho-D-ribosyl)imidazole-4-carboxamide + (6S)-5,6,7,8-tetrahydrofolate. It carries out the reaction IMP + H2O = 5-formamido-1-(5-phospho-D-ribosyl)imidazole-4-carboxamide. Its pathway is purine metabolism; IMP biosynthesis via de novo pathway; 5-formamido-1-(5-phospho-D-ribosyl)imidazole-4-carboxamide from 5-amino-1-(5-phospho-D-ribosyl)imidazole-4-carboxamide (10-formyl THF route): step 1/1. The protein operates within purine metabolism; IMP biosynthesis via de novo pathway; IMP from 5-formamido-1-(5-phospho-D-ribosyl)imidazole-4-carboxamide: step 1/1. The protein is Bifunctional purine biosynthesis protein PurH of Geotalea daltonii (strain DSM 22248 / JCM 15807 / FRC-32) (Geobacter daltonii).